A 72-amino-acid polypeptide reads, in one-letter code: Large ribosomal subunit protein bL28 (72 aa).

This sequence belongs to the bacterial ribosomal protein bL28 family.

The protein is Large ribosomal subunit protein bL28 of Chlorobium luteolum (strain DSM 273 / BCRC 81028 / 2530) (Pelodictyon luteolum).